The chain runs to 309 residues: Homoserine O-acetyltransferase (309 aa).

Cys-142 serves as the catalytic Acyl-thioester intermediate. Positions 163 and 192 each coordinate substrate. The Proton acceptor role is filled by His-235. Glu-237 is a catalytic residue. Position 249 (Arg-249) interacts with substrate.

The protein belongs to the MetA family.

Its subcellular location is the cytoplasm. It carries out the reaction L-homoserine + acetyl-CoA = O-acetyl-L-homoserine + CoA. It functions in the pathway amino-acid biosynthesis; L-methionine biosynthesis via de novo pathway; O-acetyl-L-homoserine from L-homoserine: step 1/1. Transfers an acetyl group from acetyl-CoA to L-homoserine, forming acetyl-L-homoserine. The protein is Homoserine O-acetyltransferase of Methanomethylophilus alvi (strain Mx1201).